A 429-amino-acid polypeptide reads, in one-letter code: UDP-N-acetylglucosamine 1-carboxyvinyltransferase (429 aa).

22–23 is a phosphoenolpyruvate binding site; the sequence is KN. UDP-N-acetyl-alpha-D-glucosamine is bound at residue Arg102. The active-site Proton donor is the Cys126. Cys126 is subject to 2-(S-cysteinyl)pyruvic acid O-phosphothioketal. Residues 131 to 135, Asp316, and Ile338 contribute to the UDP-N-acetyl-alpha-D-glucosamine site; that span reads RPVDL.

This sequence belongs to the EPSP synthase family. MurA subfamily.

The protein localises to the cytoplasm. It catalyses the reaction phosphoenolpyruvate + UDP-N-acetyl-alpha-D-glucosamine = UDP-N-acetyl-3-O-(1-carboxyvinyl)-alpha-D-glucosamine + phosphate. It functions in the pathway cell wall biogenesis; peptidoglycan biosynthesis. Functionally, cell wall formation. Adds enolpyruvyl to UDP-N-acetylglucosamine. The sequence is that of UDP-N-acetylglucosamine 1-carboxyvinyltransferase from Rhodopseudomonas palustris (strain BisA53).